The sequence spans 417 residues: Gamma-glutamyl phosphate reductase (417 aa).

Belongs to the gamma-glutamyl phosphate reductase family.

The protein resides in the cytoplasm. It carries out the reaction L-glutamate 5-semialdehyde + phosphate + NADP(+) = L-glutamyl 5-phosphate + NADPH + H(+). It participates in amino-acid biosynthesis; L-proline biosynthesis; L-glutamate 5-semialdehyde from L-glutamate: step 2/2. Functionally, catalyzes the NADPH-dependent reduction of L-glutamate 5-phosphate into L-glutamate 5-semialdehyde and phosphate. The product spontaneously undergoes cyclization to form 1-pyrroline-5-carboxylate. The chain is Gamma-glutamyl phosphate reductase from Meiothermus ruber.